The chain runs to 141 residues: Hemoglobin subunit alpha (141 aa).

The 141-residue stretch at 1–141 folds into the Globin domain; sequence VLSPADKTNI…VSTVLTSKYR (141 aa). S3 bears the Phosphoserine mark. At K7 the chain carries N6-succinyllysine. At T8 the chain carries Phosphothreonine. K11 is subject to N6-succinyllysine. Residue K16 is modified to N6-acetyllysine; alternate. N6-succinyllysine; alternate is present on K16. At Y24 the chain carries Phosphotyrosine. The residue at position 35 (S35) is a Phosphoserine. K40 carries the post-translational modification N6-succinyllysine. Phosphoserine is present on S49. H58 is an O2 binding site. Residue H87 participates in heme b binding. S102 carries the post-translational modification Phosphoserine. T108 is subject to Phosphothreonine. S124 carries the post-translational modification Phosphoserine. Phosphothreonine occurs at positions 134 and 137. S138 is subject to Phosphoserine.

Belongs to the globin family. In terms of assembly, heterotetramer of two alpha chains and two beta chains. Red blood cells.

Its function is as follows. Involved in oxygen transport from the lung to the various peripheral tissues. In terms of biological role, hemopressin acts as an antagonist peptide of the cannabinoid receptor CNR1. Hemopressin-binding efficiently blocks cannabinoid receptor CNR1 and subsequent signaling. The chain is Hemoglobin subunit alpha (HBA) from Chrysocyon brachyurus (Maned wolf).